The primary structure comprises 916 residues: DNA topoisomerase 1 alpha (916 aa).

The segment at 1-369 (MGTETVSKPV…SSPSSGDGQK (369 aa)) is disordered. Positions 34-47 (SNSNQSKSNSQRSK) are enriched in low complexity. Residues 60-76 (PVTSPNGTTPSNKTSIV) show a composition bias toward polar residues. A compositionally biased stretch (low complexity) spans 77–93 (KSSMPSSSSKASPAKSP). Positions 102 to 119 (VKDRSQLQKDQSECKIEH) are enriched in basic and acidic residues. Residues 130–148 (SILSGNKGPTSSRQVSSPQ) are compositionally biased toward polar residues. Residues 149–168 (PEKKNNGDRPLDRASRIIKD) are compositionally biased toward basic and acidic residues. Ser170 bears the Phosphoserine mark. The segment covering 230 to 239 (KNSSADQSSL) has biased composition (polar residues). Over residues 253–267 (MKQDSVKKEIDDKGR) the composition is skewed to basic and acidic residues. The segment covering 285 to 294 (GTDDDDDDDV) has biased composition (acidic residues). A Phosphothreonine modification is found at Thr286. The span at 354-366 (YSTSSKSSPSSGD) shows a compositional bias: low complexity. 3 interaction with DNA regions span residues 577 to 578 (KY), 640 to 645 (RAGNEK), and 731 to 733 (TAK). The Topo IB-type catalytic domain maps to 584 to 914 (GSSLKGLSDK…MDVEPEYRFS (331 aa)). The stretch at 778–860 (QRTVSKTHGA…ERDMHTKEDL (83 aa)) forms a coiled coil. The active-site O-(3'-phospho-DNA)-tyrosine intermediate is Tyr872.

It belongs to the type IB topoisomerase family. In terms of assembly, interacts with DEK3. Expressed in inflorescence meristems. Expressed in primordia of sepals, petals, stamens, carpels and ovules. Expressed in midstage embryos.

Its subcellular location is the nucleus. It catalyses the reaction ATP-independent breakage of single-stranded DNA, followed by passage and rejoining.. Releases the supercoiling and torsional tension of DNA introduced during the DNA replication and transcription by transiently cleaving and rejoining one strand of the DNA duplex. Introduces a single-strand break via transesterification at a target site in duplex DNA. The scissile phosphodiester is attacked by the catalytic tyrosine of the enzyme, resulting in the formation of a DNA-(3'-phosphotyrosyl)-enzyme intermediate and the expulsion of a 5'-OH DNA strand. The free DNA strand then rotates around the intact phosphodiester bond on the opposing strand, thus removing DNA supercoils. Finally, in the religation step, the DNA 5'-OH attacks the covalent intermediate to expel the active-site tyrosine and restore the DNA phosphodiester backbone. Can complement a TOP1-deficient yeast mutant. Plays a critical role in the maintenance of a regular pattern of organ initiation. Topoisomerases I enzymes (TOP1A and TOP1B) are essential for plant survival. Functions together with the stem cell maintenance gene WUSCHEL (WUS) in stem cell regulation. Required to maintain developmentally regulated gene repression. Functions synergistically with chromatin remodeling factors. Is required for the repression of WUS expression in flower development. Plays a role in polycomb group (PcG) protein-mediated histone H3 trimethylation on 'Lys-27' (H3K27me3) at the WUS gene locus. H3K27me3 induces transcriptional repression of WUS. May assist AGAMOUS (AG) in recruiting PcG proteins to WUS locus. Reduces nucleosome density, especially at genes that are targets of PcG proteins. Plays a role in epigenetic silencing. Involved in RNA-directed DNA methylation (RdDM) by promoting Pol V transcription to generate long non-coding RNA transcripts. Is dispensable for Pol IV-mediated small interfering RNA (siRNA) biogenesis. Promotes transposable element (TE) silencing at endogenous RdDM target loci through histone H3 dimethylation of 'Lys-9' (H3K9me2). Promotes the production of Pol V-dependent long non-coding transcripts that facilitate the recruitment of siRNA-AGO4 and AGO4 occupancy at TEs. The protein is DNA topoisomerase 1 alpha of Arabidopsis thaliana (Mouse-ear cress).